Here is a 248-residue protein sequence, read N- to C-terminus: Coproheme decarboxylase (248 aa).

Residues R130, Y144, 144 to 148 (YPMDK), K148, H171, Q184, and S222 contribute to the Fe-coproporphyrin III site. Residue Y144 is part of the active site.

The protein belongs to the ChdC family. Type 1 subfamily. Homopentamer. Fe-coproporphyrin III serves as cofactor.

It catalyses the reaction Fe-coproporphyrin III + 2 H2O2 + 2 H(+) = heme b + 2 CO2 + 4 H2O. It carries out the reaction Fe-coproporphyrin III + H2O2 + H(+) = harderoheme III + CO2 + 2 H2O. The catalysed reaction is harderoheme III + H2O2 + H(+) = heme b + CO2 + 2 H2O. It functions in the pathway porphyrin-containing compound metabolism; protoheme biosynthesis. Involved in coproporphyrin-dependent heme b biosynthesis. Catalyzes the decarboxylation of Fe-coproporphyrin III (coproheme) to heme b (protoheme IX), the last step of the pathway. The reaction occurs in a stepwise manner with a three-propionate harderoheme intermediate. This is Coproheme decarboxylase from Geobacillus stearothermophilus (strain DSM 13240 / CIP 106956 / 10).